A 727-amino-acid polypeptide reads, in one-letter code: Telomere repeats-binding bouquet formation protein 1 (727 aa).

ARM repeat units follow at residues 101-144 and 339-382; these read ELFE…RETG and NGLP…GEYP. A coiled-coil region spans residues 398-446; the sequence is ENNLEEHWRKAKEILHRIEQLEREGNEEEIQRENYQDNISSMNISIQNT. The segment covering 457-468 has biased composition (basic and acidic residues); that stretch reads RGSKAEDEDKSH. The tract at residues 457 to 493 is disordered; sequence RGSKAEDEDKSHSRQLQSYKSHGVMSKACTNDDQMKT. Positions 523–662 are interaction with TERF1; that stretch reads QNLHEETTFE…QRLSNESTTP (140 aa). T648 is modified (phosphothreonine). One can recognise a Myb-like domain in the interval 666–719; sequence KKRRIRKNFTEEEVNYLFNGVKKMGNHWNSILWSFPFQQGRKAVDLAHKYHKLT.

The protein belongs to the TERB1 family. In terms of assembly, component of the MAJIN-TERB1-TERB2 complex, composed of MAJIN, TERB1 and TERB2. Interacts with TERF1, STAG3 and SUN1. Interacts (via Myb-like domain) with the cohesin complex; probably mediated via interaction with STAG3. In terms of processing, phosphorylated by CDK. Phosphorylation by CDK takes place in late prophase when the cap exchange is prominent. is important for the stabilization of telomere attachment but dispenable for the cap exchange.

It localises to the chromosome. The protein resides in the telomere. Its subcellular location is the nucleus inner membrane. Its function is as follows. Meiosis-specific telomere-associated protein involved in meiotic telomere attachment to the nucleus inner membrane, a crucial step for homologous pairing and synapsis. Component of the MAJIN-TERB1-TERB2 complex, which promotes telomere cap exchange by mediating attachment of telomeric DNA to the inner nuclear membrane and replacement of the protective cap of telomeric chromosomes: in early meiosis, the MAJIN-TERB1-TERB2 complex associates with telomeric DNA and the shelterin/telosome complex. During prophase, the complex matures and promotes release of the shelterin/telosome complex from telomeric DNA. In the MAJIN-TERB1-TERB2 complex, TERB1 probably mediates association with the shelterin/telosome complex via interaction with TERF1, promoting priming telomeric DNA attachment'. Promotes telomere association with the nuclear envelope and deposition of the SUN-KASH/LINC complex. Also recruits cohesin to telomeres to develop structural rigidity. The sequence is that of Telomere repeats-binding bouquet formation protein 1 from Homo sapiens (Human).